The primary structure comprises 751 residues: Dachshund homolog 1 (751 aa).

Residues 1 to 178 (MAVPAALIPP…PSPVENTPQN (178 aa)) are disordered. 2 stretches are compositionally biased toward low complexity: residues 20–53 (ISTS…SGPT) and 61–74 (ASSA…TVTS). Composition is skewed to gly residues over residues 75-97 (PGGG…GGGS) and 107-119 (SSGG…GGGA). Residues 120–156 (SSTPITASTGSSSSSSSSSSSSSSSSSSSSSSSSSSS) show a composition bias toward low complexity. Positions 167–178 (STPSPVENTPQN) are enriched in polar residues. The interval 182–268 (KMVDLRGAKV…LISRKDFETL (87 aa)) is DACHbox-N. The interval 182 to 377 (KMVDLRGAKV…VGSSGGSWDK (196 aa)) is interaction with SIX6 and HDAC3. 4 disordered regions span residues 273-295 (TNAS…PENS), 351-393 (SNNQ…APVA), 467-525 (SPPS…RIPV), and 537-556 (MGLS…AGHD). 2 stretches are compositionally biased toward polar residues: residues 285–294 (RTQSVTSPEN) and 351–369 (SNNQ…SSVG). At serine 484 the chain carries Phosphoserine. Positions 499-517 (SHPSSHRSSSVSSSPARTE) are enriched in low complexity. The DACHbox-C stretch occupies residues 609-689 (SSIETLLTNI…KAKRKLQEAL (81 aa)). An interaction with SIN3A region spans residues 620–699 (GLLKVAIDNA…EFETKRREQA (80 aa)). Residues 623 to 711 (KVAIDNARAQ…TLKQAASADS (89 aa)) adopt a coiled-coil conformation.

Belongs to the DACH/dachshund family. In terms of assembly, interacts with SIX1, SIX6 and EYA3. Interacts with NCOR1 and HDAC3 through its N-terminus. Interacts with SIN3A through its C-terminus. Interacts with SMAD3 and SMAD4. As to expression, expressed at higher levels in adult kidney and lung, and at lower levels in brain and testis. Expressed in embryonal kidneys, eyes, cochleae and limb buds.

The protein localises to the nucleus. Functionally, transcription factor that is involved in regulation of organogenesis. Seems to be a regulator of SIX1, SIX6 and probably SIX5. Corepression of precursor cell proliferation in myoblasts by SIX1 is switched to coactivation through recruitment of EYA3 to the SIX1-DACH1 complex. Transcriptional activation also seems to involve association of CREBBP. Seems to act as a corepressor of SIX6 in regulating proliferation by directly repressing cyclin-dependent kinase inhibitors, including the p27Kip1 promoter. Inhibits TGF-beta signaling through interaction with SMAD4 and NCOR1. Binds to chromatin DNA via its DACHbox-N domain. The polypeptide is Dachshund homolog 1 (Dach1) (Mus musculus (Mouse)).